We begin with the raw amino-acid sequence, 581 residues long: FAD-linked oxidoreductase easE (581 aa).

An N-terminal signal peptide occupies residues 1-25 (MYRLLGPLACLALAWFFTWAPSGRC). Asn-44 and Asn-73 each carry an N-linked (GlcNAc...) asparagine glycan. The FAD-binding PCMH-type domain occupies 122-306 (HQGRIPLYSA…AQATIRVFPD (185 aa)). Asn-369 is a glycosylation site (N-linked (GlcNAc...) asparagine).

This sequence belongs to the oxygen-dependent FAD-linked oxidoreductase family. FAD is required as a cofactor.

It participates in alkaloid biosynthesis; ergot alkaloid biosynthesis. FAD-linked oxidoreductase; part of the gene cluster that mediates the biosynthesis of fungal ergot alkaloid. DmaW catalyzes the first step of ergot alkaloid biosynthesis by condensing dimethylallyl diphosphate (DMAP) and tryptophan to form 4-dimethylallyl-L-tryptophan. The second step is catalyzed by the methyltransferase easF that methylates 4-dimethylallyl-L-tryptophan in the presence of S-adenosyl-L-methionine, resulting in the formation of 4-dimethylallyl-L-abrine. The catalase easC and the FAD-dependent oxidoreductase easE then transform 4-dimethylallyl-L-abrine to chanoclavine-I which is further oxidized by easD in the presence of NAD(+), resulting in the formation of chanoclavine-I aldehyde. Agroclavine dehydrogenase easG then mediates the conversion of chanoclavine-I aldehyde to agroclavine via a non-enzymatic adduct reaction: the substrate is an iminium intermediate that is formed spontaneously from chanoclavine-I aldehyde in the presence of glutathione. Further conversion of agroclavine to paspalic acid is a two-step process involving oxidation of agroclavine to elymoclavine and of elymoclavine to paspalic acid, the second step being performed by the elymoclavine oxidase cloA. However, cloA does not encode a functional enzyme indicating that C.fusiformis terminates its ergot alkaloid pathway at elymoclavine. The polypeptide is FAD-linked oxidoreductase easE (Claviceps fusiformis (Ergot fungus)).